The sequence spans 220 residues: Octanoyltransferase (220 aa).

The region spanning Asp-31–Gln-206 is the BPL/LPL catalytic domain. Residues Arg-70 to His-77, Ser-137 to Gly-139, and Gly-150 to Ala-152 contribute to the substrate site. Residue Cys-168 is the Acyl-thioester intermediate of the active site.

This sequence belongs to the LipB family.

It localises to the cytoplasm. It catalyses the reaction octanoyl-[ACP] + L-lysyl-[protein] = N(6)-octanoyl-L-lysyl-[protein] + holo-[ACP] + H(+). It functions in the pathway protein modification; protein lipoylation via endogenous pathway; protein N(6)-(lipoyl)lysine from octanoyl-[acyl-carrier-protein]: step 1/2. Its function is as follows. Catalyzes the transfer of endogenously produced octanoic acid from octanoyl-acyl-carrier-protein onto the lipoyl domains of lipoate-dependent enzymes. Lipoyl-ACP can also act as a substrate although octanoyl-ACP is likely to be the physiological substrate. This is Octanoyltransferase from Vibrio campbellii (strain ATCC BAA-1116).